A 301-amino-acid chain; its full sequence is Acetylglutamate kinase (301 aa).

Substrate contacts are provided by residues 68–69 (GG), arginine 90, and asparagine 195.

It belongs to the acetylglutamate kinase family. ArgB subfamily.

The protein localises to the cytoplasm. It carries out the reaction N-acetyl-L-glutamate + ATP = N-acetyl-L-glutamyl 5-phosphate + ADP. It functions in the pathway amino-acid biosynthesis; L-arginine biosynthesis; N(2)-acetyl-L-ornithine from L-glutamate: step 2/4. Its function is as follows. Catalyzes the ATP-dependent phosphorylation of N-acetyl-L-glutamate. The chain is Acetylglutamate kinase from Pseudomonas paraeruginosa (strain DSM 24068 / PA7) (Pseudomonas aeruginosa (strain PA7)).